The primary structure comprises 382 residues: S-adenosylmethionine synthase (382 aa).

His-15 provides a ligand contact to ATP. Residue Asp-17 participates in Mg(2+) binding. Glu-43 lines the K(+) pocket. Residues Glu-56 and Gln-99 each contribute to the L-methionine site. Positions 99–109 (QSPDINQGVDR) are flexible loop. ATP contacts are provided by residues 164-166 (DAK), 230-231 (RF), Asp-239, 245-246 (RK), Ala-262, and Lys-266. Asp-239 contributes to the L-methionine binding site. Position 270 (Lys-270) interacts with L-methionine.

It belongs to the AdoMet synthase family. Homotetramer; dimer of dimers. It depends on Mg(2+) as a cofactor. The cofactor is K(+).

Its subcellular location is the cytoplasm. It catalyses the reaction L-methionine + ATP + H2O = S-adenosyl-L-methionine + phosphate + diphosphate. It functions in the pathway amino-acid biosynthesis; S-adenosyl-L-methionine biosynthesis; S-adenosyl-L-methionine from L-methionine: step 1/1. Functionally, catalyzes the formation of S-adenosylmethionine (AdoMet) from methionine and ATP. The overall synthetic reaction is composed of two sequential steps, AdoMet formation and the subsequent tripolyphosphate hydrolysis which occurs prior to release of AdoMet from the enzyme. The chain is S-adenosylmethionine synthase from Glaesserella parasuis serovar 5 (strain SH0165) (Haemophilus parasuis).